Here is a 245-residue protein sequence, read N- to C-terminus: 2,3-bisphosphoglycerate-dependent phosphoglycerate mutase (245 aa).

Residues 8-15 (RHGQSLWN), 21-22 (TG), R60, 87-90 (ERHY), K98, 114-115 (RR), and 183-184 (GN) each bind substrate. The active-site Tele-phosphohistidine intermediate is H9. Catalysis depends on E87, which acts as the Proton donor/acceptor.

It belongs to the phosphoglycerate mutase family. BPG-dependent PGAM subfamily.

It catalyses the reaction (2R)-2-phosphoglycerate = (2R)-3-phosphoglycerate. It functions in the pathway carbohydrate degradation; glycolysis; pyruvate from D-glyceraldehyde 3-phosphate: step 3/5. Its function is as follows. Catalyzes the interconversion of 2-phosphoglycerate and 3-phosphoglycerate. This chain is 2,3-bisphosphoglycerate-dependent phosphoglycerate mutase, found in Bacillus cereus (strain B4264).